Here is a 132-residue protein sequence, read N- to C-terminus: Small ribosomal subunit protein uS8c (132 aa).

Belongs to the universal ribosomal protein uS8 family. Part of the 30S ribosomal subunit.

It localises to the plastid. The protein resides in the chloroplast. Functionally, one of the primary rRNA binding proteins, it binds directly to 16S rRNA central domain where it helps coordinate assembly of the platform of the 30S subunit. This Phaeodactylum tricornutum (strain CCAP 1055/1) protein is Small ribosomal subunit protein uS8c (rps8).